The primary structure comprises 495 residues: Adenosylhomocysteinase (495 aa).

Substrate contacts are provided by T71, D156, and E218. NAD(+) is bound at residue 219-221 (TTT). Residues K248 and D252 each coordinate substrate. Residues N253, 282 to 287 (GYGDVG), E305, N340, 361 to 363 (IGH), and N409 contribute to the NAD(+) site.

This sequence belongs to the adenosylhomocysteinase family. Requires NAD(+) as cofactor.

Its subcellular location is the cytoplasm. It carries out the reaction S-adenosyl-L-homocysteine + H2O = L-homocysteine + adenosine. It functions in the pathway amino-acid biosynthesis; L-homocysteine biosynthesis; L-homocysteine from S-adenosyl-L-homocysteine: step 1/1. Its function is as follows. May play a key role in the regulation of the intracellular concentration of adenosylhomocysteine. This chain is Adenosylhomocysteinase, found in Mycobacterium tuberculosis (strain ATCC 25177 / H37Ra).